The sequence spans 83 residues: Kappa-theraphotoxin-Cg2a (83 aa).

An N-terminal signal peptide occupies residues 1 to 21 (MKGSAFAIILGLVVLCACSFA). Residues 22 to 53 (EDEQDQFASPNELLRSMFLESRHELIPEVEGR) constitute a propeptide that is removed on maturation. Disulfide bonds link C55–C69, C62–C74, and C68–C78. L82 bears the Leucine amide mark.

This sequence belongs to the neurotoxin 30 (phrixotoxin) family. In terms of tissue distribution, expressed by the venom gland.

The protein localises to the secreted. In terms of biological role, inhibits voltage-gated potassium channels of the subtype Kv4.1/KCND1 with high affinity and shows weak effects on Kv4.2/KCND2 and Kv2.1/KCNB1 subtypes. The toxin modifies the gating behavior of the channel and may interact with the S3-S4 extracellular loop. The polypeptide is Kappa-theraphotoxin-Cg2a (Chilobrachys guangxiensis (Chinese earth tiger tarantula)).